The primary structure comprises 197 residues: dITP/XTP pyrophosphatase (197 aa).

Residue Thr8–Lys13 participates in substrate binding. The Mg(2+) site is built by Glu40 and Asp69. Asp69 functions as the Proton acceptor in the catalytic mechanism. Substrate contacts are provided by residues Ser70, Phe154–Asp157, Lys177, and His182–Arg183.

The protein belongs to the HAM1 NTPase family. As to quaternary structure, homodimer. Requires Mg(2+) as cofactor.

It catalyses the reaction XTP + H2O = XMP + diphosphate + H(+). The catalysed reaction is dITP + H2O = dIMP + diphosphate + H(+). The enzyme catalyses ITP + H2O = IMP + diphosphate + H(+). Functionally, pyrophosphatase that catalyzes the hydrolysis of nucleoside triphosphates to their monophosphate derivatives, with a high preference for the non-canonical purine nucleotides XTP (xanthosine triphosphate), dITP (deoxyinosine triphosphate) and ITP. Seems to function as a house-cleaning enzyme that removes non-canonical purine nucleotides from the nucleotide pool, thus preventing their incorporation into DNA/RNA and avoiding chromosomal lesions. The sequence is that of dITP/XTP pyrophosphatase from Pectobacterium atrosepticum (strain SCRI 1043 / ATCC BAA-672) (Erwinia carotovora subsp. atroseptica).